Here is a 772-residue protein sequence, read N- to C-terminus: Protocadherin beta-6 (772 aa).

The first 28 residues, 1–28 (METTLAKTPEKRQVVFLAILLLLWEAGS), serve as a signal peptide directing secretion. Cadherin domains are found at residues 31 to 133 (IRYS…SPEF), 134 to 242 (PDTE…APEF), 243 to 346 (VQSL…APKL), 347 to 450 (TISS…APAF), and 451 to 560 (TQTS…APFI). The Extracellular portion of the chain corresponds to 31–690 (IRYSIPEETE…QDEDMLTLYL (660 aa)). Cysteine 96 and cysteine 102 are oxidised to a cystine. Asparagine 169 carries N-linked (GlcNAc...) asparagine glycosylation. Serine 223 carries an O-linked (Man) serine glycan. O-linked (Man) threonine glycosylation occurs at threonine 225. N-linked (GlcNAc...) asparagine glycosylation is present at asparagine 417. Asparagine 566 is a glycosylation site (N-linked (GlcNAc...) asparagine). The Cadherin 6 domain occupies 575–675 (LPRAAEPGYL…SQPYLPLPEV (101 aa)). The helical transmembrane segment at 691–711 (VIALASVSSLFLLSVLLFVGV) threads the bilayer. Topologically, residues 712–772 (RLCRRVREAS…DFKFLNHYSQ (61 aa)) are cytoplasmic.

Forms homodimers in trans (molecules expressed by two different cells). Forms promiscuous heterodimers in cis (at the plasma membrane of the same cell) with other protocadherins.

Its subcellular location is the cell membrane. Calcium-dependent cell-adhesion protein involved in cells self-recognition and non-self discrimination. Thereby, it is involved in the establishment and maintenance of specific neuronal connections in the brain. The sequence is that of Protocadherin beta-6 from Mus musculus (Mouse).